The following is a 328-amino-acid chain: 4-hydroxy-3-methylbut-2-enyl diphosphate reductase (328 aa).

C13 contacts [4Fe-4S] cluster. Residues H41 and H75 each contribute to the (2E)-4-hydroxy-3-methylbut-2-enyl diphosphate site. 2 residues coordinate dimethylallyl diphosphate: H41 and H75. Isopentenyl diphosphate-binding residues include H41 and H75. C97 provides a ligand contact to [4Fe-4S] cluster. Residue H125 participates in (2E)-4-hydroxy-3-methylbut-2-enyl diphosphate binding. Position 125 (H125) interacts with dimethylallyl diphosphate. Position 125 (H125) interacts with isopentenyl diphosphate. E127 acts as the Proton donor in catalysis. T168 is a (2E)-4-hydroxy-3-methylbut-2-enyl diphosphate binding site. C229 serves as a coordination point for [4Fe-4S] cluster. The (2E)-4-hydroxy-3-methylbut-2-enyl diphosphate site is built by S257, S258, N259, and S306. Dimethylallyl diphosphate-binding residues include S257, S258, N259, and S306. Positions 257, 258, 259, and 306 each coordinate isopentenyl diphosphate.

It belongs to the IspH family. [4Fe-4S] cluster serves as cofactor.

It catalyses the reaction isopentenyl diphosphate + 2 oxidized [2Fe-2S]-[ferredoxin] + H2O = (2E)-4-hydroxy-3-methylbut-2-enyl diphosphate + 2 reduced [2Fe-2S]-[ferredoxin] + 2 H(+). It carries out the reaction dimethylallyl diphosphate + 2 oxidized [2Fe-2S]-[ferredoxin] + H2O = (2E)-4-hydroxy-3-methylbut-2-enyl diphosphate + 2 reduced [2Fe-2S]-[ferredoxin] + 2 H(+). It functions in the pathway isoprenoid biosynthesis; dimethylallyl diphosphate biosynthesis; dimethylallyl diphosphate from (2E)-4-hydroxy-3-methylbutenyl diphosphate: step 1/1. Its pathway is isoprenoid biosynthesis; isopentenyl diphosphate biosynthesis via DXP pathway; isopentenyl diphosphate from 1-deoxy-D-xylulose 5-phosphate: step 6/6. Functionally, catalyzes the conversion of 1-hydroxy-2-methyl-2-(E)-butenyl 4-diphosphate (HMBPP) into a mixture of isopentenyl diphosphate (IPP) and dimethylallyl diphosphate (DMAPP). Acts in the terminal step of the DOXP/MEP pathway for isoprenoid precursor biosynthesis. This is 4-hydroxy-3-methylbut-2-enyl diphosphate reductase from Chlorobium phaeobacteroides (strain DSM 266 / SMG 266 / 2430).